The chain runs to 476 residues: Calcium/calmodulin-dependent protein kinase type 1G (476 aa).

Residues 23-277 enclose the Protein kinase domain; sequence FIFMEVLGSG…CEKALRHPWI (255 aa). Residues 29–37 and K52 contribute to the ATP site; that span reads LGSGAFSEV. The active-site Proton acceptor is D143. The interval 277–317 is autoinhibitory domain; it reads IDGNTALHRDIYPSVSLQIQKNFAKSKWRQAFNAAAVVHHM. The tract at residues 297–318 is calmodulin-binding; that stretch reads KNFAKSKWRQAFNAAAVVHHMR. The segment at 326-387 is disordered; that stretch reads SPSVRQEVEN…SSRPSAPGGR (62 aa).

This sequence belongs to the protein kinase superfamily. CAMK Ser/Thr protein kinase family. CaMK subfamily. Post-translationally, prenylated on Cys-473.

It localises to the cytoplasm. Its subcellular location is the golgi apparatus membrane. The protein resides in the cell membrane. The enzyme catalyses L-seryl-[protein] + ATP = O-phospho-L-seryl-[protein] + ADP + H(+). It catalyses the reaction L-threonyl-[protein] + ATP = O-phospho-L-threonyl-[protein] + ADP + H(+). With respect to regulation, activated by Ca(2+)/calmodulin. Binding of calmodulin is thought to result in a conformational change and leads to activation through phosphorylation by CAMKK1. Calcium/calmodulin-dependent protein kinase belonging to a proposed calcium-triggered signaling cascade. In vitro phosphorylates transcription factor CREB1. The polypeptide is Calcium/calmodulin-dependent protein kinase type 1G (Camk1g) (Rattus norvegicus (Rat)).